Here is a 299-residue protein sequence, read N- to C-terminus: Non-structural protein V (299 aa).

A disordered region spans residues 41 to 99; that stretch reads DNPGQERATCREEKAGSSGLSKPCLSAIGSTEGGAPRIRGQGPGESDDDAETLGIPPRN. An interaction with host STAT1 region spans residues 110 to 120; that stretch reads YYVYDHSGEAV. The segment covering 134–145 has biased composition (low complexity); sequence GLDGDSTLSGGD. Positions 134–162 are disordered; it reads GLDGDSTLSGGDNESENSDVDIGEPDTEG. Acidic residues predominate over residues 146-160; sequence NESENSDVDIGEPDT. The Zn(2+) site is built by H232, C251, C255, C267, C269, C272, C276, and C279.

The protein belongs to the paramyxoviruses V protein family. In terms of assembly, interacts with host IFIH1/MDA5 and DHX58/LGP2; these interactions are involved in the inhibition of the host type I interferon signaling pathway. Interacts with host TYK2; this interaction inhibits the type I interferon signaling pathway without affecting the type II pathway. Interacts with host IRF7; this interaction inhibits IRF7 translocation to the nucleus. Interacts with host CHUK. Interacts with host RELA/p65; this interaction inhibits the nuclear translocation of NF-KappaB. Interacts (via N-terminus) with host STAT1 and JAK1; these interactions inhibit STAT1 phosphorylation by Jak1 and thereby the type I interferon signaling pathway. Interacts (via C-terminus) with host STAT2; this interaction is involved in the inhibition of the host type I interferon signaling pathway. Forms a complex with host PPP1CA and PPP1CC; this interaction prevents dephosphorylation of host IFIH1/MDA5 and leads to the inhibition of the host type I interferon signaling pathway. Interacts with host IRF9; this interaction prevents the binding of IRF9 to STAT2 and thereby the type I interferon signaling pathway.

It localises to the host cytoplasm. Its function is as follows. Plays an essential role in the inhibition of host immune response. Prevents the establishment of cellular antiviral state by blocking interferon-alpha/beta (IFN-alpha/beta) production and signaling pathway. Interacts with host IFIH1/MDA5 and DHX58/LGP2 to inhibit the transduction pathway involved in the activation of IFN-beta promoter, thus protecting the virus against cell antiviral state. Blocks the type I interferon signaling pathway by interacting with host TYK2 and thereby inhibiting downstream STAT1 and STAT2 phosphorylation. Moderately affects the type II interferon signaling. The polypeptide is Non-structural protein V (P/V) (Measles virus (strain Edmonston-Schwarz vaccine) (MeV)).